Consider the following 421-residue polypeptide: 3-isopropylmalate dehydratase large subunit (421 aa).

[4Fe-4S] cluster-binding residues include cysteine 302, cysteine 362, and cysteine 365.

Belongs to the aconitase/IPM isomerase family. LeuC type 2 subfamily. As to quaternary structure, heterodimer of LeuC and LeuD. The cofactor is [4Fe-4S] cluster.

It catalyses the reaction (2R,3S)-3-isopropylmalate = (2S)-2-isopropylmalate. Its pathway is amino-acid biosynthesis; L-leucine biosynthesis; L-leucine from 3-methyl-2-oxobutanoate: step 2/4. Functionally, catalyzes the isomerization between 2-isopropylmalate and 3-isopropylmalate, via the formation of 2-isopropylmaleate. The protein is 3-isopropylmalate dehydratase large subunit of Campylobacter concisus (strain 13826).